We begin with the raw amino-acid sequence, 261 residues long: Guanine nucleotide exchange factor BopE (261 aa).

Positions 241 to 253 (RRAAQDASRDEKG) are enriched in basic and acidic residues. The segment at 241–261 (RRAAQDASRDEKGAANAADGA) is disordered.

Belongs to the GEF (guanine exchange factor) SopE family. Monomer. Interacts with human CDC42.

It is found in the secreted. In terms of biological role, activator for both CDC42 and RAC1 by directly interacting with these Rho GTPases and acting as a guanine nucleotide exchange factor (GEF). This activation results in actin cytoskeleton rearrangements and stimulates membrane ruffling, thus promoting bacterial entry into non-phagocytic cells. In Burkholderia thailandensis (strain ATCC 700388 / DSM 13276 / CCUG 48851 / CIP 106301 / E264), this protein is Guanine nucleotide exchange factor BopE (bopE).